We begin with the raw amino-acid sequence, 330 residues long: Ribosomal RNA small subunit methyltransferase H (330 aa).

S-adenosyl-L-methionine contacts are provided by residues 48 to 50 (GGH), D67, L101, D115, and Q122.

This sequence belongs to the methyltransferase superfamily. RsmH family.

The protein localises to the cytoplasm. It catalyses the reaction cytidine(1402) in 16S rRNA + S-adenosyl-L-methionine = N(4)-methylcytidine(1402) in 16S rRNA + S-adenosyl-L-homocysteine + H(+). In terms of biological role, specifically methylates the N4 position of cytidine in position 1402 (C1402) of 16S rRNA. The polypeptide is Ribosomal RNA small subunit methyltransferase H (Pseudarthrobacter chlorophenolicus (strain ATCC 700700 / DSM 12829 / CIP 107037 / JCM 12360 / KCTC 9906 / NCIMB 13794 / A6) (Arthrobacter chlorophenolicus)).